Reading from the N-terminus, the 1079-residue chain is BRD4-interacting chromatin-remodeling complex-associated protein-like (1079 aa).

Disordered regions lie at residues 51–79 and 509–604; these read NSSN…LPLS and LHLS…TPGT. Low complexity predominate over residues 68–79; the sequence is LGEGPSDGLPLS. A compositionally biased stretch (polar residues) spans 544-576; that stretch reads SSASTAHPSLGSAVQSGSSGSNFTGDQLTQPNR. Positions 590–604 are enriched in low complexity; that stretch reads SSSKSTSTFSNTPGT. At Ser623 the chain carries Phosphoserine. 3 disordered regions span residues 669-691, 837-877, and 917-954; these read EKVV…GGQK, TQFG…NHDQ, and TSEE…TESK. Composition is skewed to basic and acidic residues over residues 918–928 and 938–952; these read SEEKASRREPL and EGHR…HGTE. Ser980 carries the post-translational modification Phosphoserine.

In terms of assembly, component of the multiprotein chromatin-remodeling complexes SWI/SNF: SWI/SNF-A (BAF), SWI/SNF-B (PBAF) and related complexes. The canonical complex contains a catalytic subunit (either SMARCA4/BRG1/BAF190A or SMARCA2/BRM/BAF190B) and at least SMARCE1, ACTL6A/BAF53, SMARCC1/BAF155, SMARCC2/BAF170, and SMARCB1/SNF5/BAF47. Other subunits specific to each of the complexes may also be present permitting several possible combinations developmentally and tissue specific. Component of the SWI/SNF (GBAF) subcomplex, which includes at least BICRA or BICRAL (mutually exclusive), BRD9, SS18, the core BAF subunits, SMARCA2/BRM, SMARCA4/BRG1/BAF190A, ACTL6A/BAF53, SMARCC1/BAF155, and SMARCD1/BAF60A.

Functionally, component of SWI/SNF chromatin remodeling subcomplex GBAF that carries out key enzymatic activities, changing chromatin structure by altering DNA-histone contacts within a nucleosome in an ATP-dependent manner. The chain is BRD4-interacting chromatin-remodeling complex-associated protein-like from Homo sapiens (Human).